Here is a 199-residue protein sequence, read N- to C-terminus: Recombination protein RecR (199 aa).

The C4-type zinc-finger motif lies at 58-73 (CSTCNNLTDKDPCTIC). One can recognise a Toprim domain in the interval 81-176 (NLICVVQDAR…RVTRLAYGLP (96 aa)).

Belongs to the RecR family.

Functionally, may play a role in DNA repair. It seems to be involved in an RecBC-independent recombinational process of DNA repair. It may act with RecF and RecO. This is Recombination protein RecR from Natranaerobius thermophilus (strain ATCC BAA-1301 / DSM 18059 / JW/NM-WN-LF).